The chain runs to 301 residues: N-acetylmuramic acid 6-phosphate etherase (301 aa).

The SIS domain occupies 57–220 (IAEAFRQGGR…TTGAMIRTGK (164 aa)). Glutamate 85 functions as the Proton donor in the catalytic mechanism. The active site involves glutamate 116.

The protein belongs to the GCKR-like family. MurNAc-6-P etherase subfamily. In terms of assembly, homodimer.

It catalyses the reaction N-acetyl-D-muramate 6-phosphate + H2O = N-acetyl-D-glucosamine 6-phosphate + (R)-lactate. It functions in the pathway amino-sugar metabolism; 1,6-anhydro-N-acetylmuramate degradation. It participates in amino-sugar metabolism; N-acetylmuramate degradation. Its pathway is cell wall biogenesis; peptidoglycan recycling. Specifically catalyzes the cleavage of the D-lactyl ether substituent of MurNAc 6-phosphate, producing GlcNAc 6-phosphate and D-lactate. Together with AnmK, is also required for the utilization of anhydro-N-acetylmuramic acid (anhMurNAc) either imported from the medium or derived from its own cell wall murein, and thus plays a role in cell wall recycling. The chain is N-acetylmuramic acid 6-phosphate etherase from Photorhabdus laumondii subsp. laumondii (strain DSM 15139 / CIP 105565 / TT01) (Photorhabdus luminescens subsp. laumondii).